Consider the following 566-residue polypeptide: MDIKSNIINALKEVISKEICKEIDIKLDKTPNLELGDYSVNICFRLAKELKKNPKIIAEELVDKLKAMNIEGVKEIKAVNGYINFYIDYNKFAKNLMEEIDKKGNNYGRGDKKSIKIILEHTSANPNGPLHIGHLRNAIIGDCLKRILEFYGYDVETHYYVNDMGRQMALVVYGIELFGLDKEKKKDHAIAETYVKINKYLEEHPEEEEKILELMRKYEDALENNEDNEITKKFEFAVNYALDGIKETLKNLNIKHDTFVWESSYVRNGMVKKVIEKLMETGKVIKEETYMLDLSDFGIEKKMVLARANGTSLYSTRDIAYHLDKLSKCDIGIDVLGADHKLTAEMVKAALKLLGSKVPEVIFYEFISLPEGSMSTRRGRFISTDELLEEAIKRAKEECNKRGVEENIAYDIGLGAVRYNIARISPEKPMVFRWEEALDFEKVGCPFIQYAHARCCSILKEAENKGVKDEAVFNYELTSEEKELIKMLDEFKDIIKESAESRRVHILANYLLELAKAFNRFYANCPILMTKVDDDVKKSRLKLVKSTKTVLETGLELLGINCPGRM.

The short motif at 124-134 (ANPNGPLHIGH) is the 'HIGH' region element.

The protein belongs to the class-I aminoacyl-tRNA synthetase family.

The protein resides in the cytoplasm. The enzyme catalyses tRNA(Arg) + L-arginine + ATP = L-arginyl-tRNA(Arg) + AMP + diphosphate. The sequence is that of Arginine--tRNA ligase (argS) from Methanocaldococcus jannaschii (strain ATCC 43067 / DSM 2661 / JAL-1 / JCM 10045 / NBRC 100440) (Methanococcus jannaschii).